The sequence spans 688 residues: MDFITINSGNRTEEFALKQVAKQATSSLMYRLGKTLILASVCVEREPVSEDFLPLVVQFLEKSYAAGKIPGGFVKREGRAQDFEILTSRLIDRTLRPLFPKDYRYPTQITLMVLNHDIENDLQVSALNAASATLFLAHIAPIKSVSACRIARVDNEFIINPSASLLNQSSLDLFVSGTKESLNMIEMRSLGQKLNALEEPLMLEALELAQKSLKETCALYEEAFTPYQNELLFKEGEGIVLNERLLDLLKNQYFDEIIKGIESSALSERENVFKEVAKKISEAHSEFSLEEIELSLEKVKKTEIRRMIIQDKIRPDKRALEEVRPISIESNLLPMAHSSILFTRGQTQSLVVGVLGMDNDAQTHENLEHKAPIKERFMFHYNFPPFCVGEASSIGATSRRELGHGNLAKRALETSIKNKEQVIRLVSEILESNGSSSMASVCAGSLALYASGVEIHDLVAGVAMGMVSERQDHAILSDISGLEDAEGDMDFKIAGNLEGITAMQMDTKMSGIQLEVLYQALLQAKRARKHILKIMHEAKEKIVINFSHLPQTEIFNVAPDKIIEIIGQGGRVIKEIVEKFEVKIDLNTPSGEVKIMGNKERVLKTKEFILNYLHSLDQELEQYAIDEVLEAQVKRIVDFGAFLSLPKGGEGLLRKQNMDKCQVILKEGDSIRCRVISFNKGKIALDLA.

Mg(2+) contacts are provided by Asp-484 and Asp-490. The KH domain occupies 550 to 609 (PQTEIFNVAPDKIIEIIGQGGRVIKEIVEKFEVKIDLNTPSGEVKIMGNKERVLKTKEFI). The S1 motif domain occupies 626 to 688 (DEVLEAQVKR…NKGKIALDLA (63 aa)).

Belongs to the polyribonucleotide nucleotidyltransferase family. Mg(2+) is required as a cofactor.

The protein localises to the cytoplasm. It carries out the reaction RNA(n+1) + phosphate = RNA(n) + a ribonucleoside 5'-diphosphate. Involved in mRNA degradation. Catalyzes the phosphorolysis of single-stranded polyribonucleotides processively in the 3'- to 5'-direction. This is Polyribonucleotide nucleotidyltransferase from Helicobacter pylori (strain J99 / ATCC 700824) (Campylobacter pylori J99).